The chain runs to 228 residues: Cytochrome c oxidase subunit 2 (228 aa).

The Mitochondrial intermembrane portion of the chain corresponds to 1-26 (MATWANLGLQNSSSPLMEQLNFFHDH). A helical membrane pass occupies residues 27–48 (TLLILIMITVMIAYIMFMLFFN). At 49–62 (KFTNRYLLHGQTIE) the chain is on the mitochondrial matrix side. The chain crosses the membrane as a helical span at residues 63 to 82 (IIWTILPAIILMFIAFPSLR). Residues 83 to 228 (LLYLMDEINS…FIKWISSQMN (146 aa)) lie on the Mitochondrial intermembrane side of the membrane. The Cu cation site is built by histidine 161, cysteine 196, glutamate 198, cysteine 200, histidine 204, and methionine 207. Glutamate 198 provides a ligand contact to Mg(2+).

Belongs to the cytochrome c oxidase subunit 2 family. Component of the cytochrome c oxidase (complex IV, CIV), a multisubunit enzyme composed of a catalytic core of 3 subunits and several supernumerary subunits. The complex exists as a monomer or a dimer and forms supercomplexes (SCs) in the inner mitochondrial membrane with ubiquinol-cytochrome c oxidoreductase (cytochrome b-c1 complex, complex III, CIII). Cu cation serves as cofactor.

It is found in the mitochondrion inner membrane. The catalysed reaction is 4 Fe(II)-[cytochrome c] + O2 + 8 H(+)(in) = 4 Fe(III)-[cytochrome c] + 2 H2O + 4 H(+)(out). Its function is as follows. Component of the cytochrome c oxidase, the last enzyme in the mitochondrial electron transport chain which drives oxidative phosphorylation. The respiratory chain contains 3 multisubunit complexes succinate dehydrogenase (complex II, CII), ubiquinol-cytochrome c oxidoreductase (cytochrome b-c1 complex, complex III, CIII) and cytochrome c oxidase (complex IV, CIV), that cooperate to transfer electrons derived from NADH and succinate to molecular oxygen, creating an electrochemical gradient over the inner membrane that drives transmembrane transport and the ATP synthase. Cytochrome c oxidase is the component of the respiratory chain that catalyzes the reduction of oxygen to water. Electrons originating from reduced cytochrome c in the intermembrane space (IMS) are transferred via the dinuclear copper A center (CU(A)) of subunit 2 and heme A of subunit 1 to the active site in subunit 1, a binuclear center (BNC) formed by heme A3 and copper B (CU(B)). The BNC reduces molecular oxygen to 2 water molecules using 4 electrons from cytochrome c in the IMS and 4 protons from the mitochondrial matrix. This Aedes aegypti (Yellowfever mosquito) protein is Cytochrome c oxidase subunit 2 (COII).